The following is a 72-amino-acid chain: Large ribosomal subunit protein uL29 (72 aa).

The protein belongs to the universal ribosomal protein uL29 family.

This chain is Large ribosomal subunit protein uL29, found in Chlamydia felis (strain Fe/C-56) (Chlamydophila felis).